The primary structure comprises 162 residues: Ribosome maturation factor RimP (162 aa).

Belongs to the RimP family.

It is found in the cytoplasm. In terms of biological role, required for maturation of 30S ribosomal subunits. The polypeptide is Ribosome maturation factor RimP (Cupriavidus necator (strain ATCC 17699 / DSM 428 / KCTC 22496 / NCIMB 10442 / H16 / Stanier 337) (Ralstonia eutropha)).